The chain runs to 1202 residues: Stress response protein NST1 (1202 aa).

Disordered stretches follow at residues 28 to 217, 236 to 291, 390 to 423, 487 to 543, 579 to 852, 904 to 967, and 979 to 1015; these read RHLN…EDDA, GHYQ…SGSK, RSAP…DDEE, AHPS…RMEE, ELEE…SMLP, PNQA…DSDV, and LLDE…DAPN. Over residues 158 to 167 the composition is skewed to basic and acidic residues; the sequence is REKEAAKKAA. Positions 178–187 are enriched in polar residues; it reads NGVSSGSTHL. Positions 204–217 are enriched in acidic residues; the sequence is PELDDPQYDDEDDA. Over residues 252–261 the composition is skewed to basic residues; that stretch reads KKPRKKKKGA. 2 stretches are compositionally biased toward acidic residues: residues 408–423 and 504–536; these read YDDE…DDEE and PEEE…EAMT. Positions 557–704 form a coiled coil; the sequence is EQRVLQAYRE…EKKVKDDAKR (148 aa). A compositionally biased stretch (basic and acidic residues) spans 579-710; it reads ELEEENEKKD…DAKRKERDRA (132 aa). Positions 754-789 are enriched in polar residues; sequence RPRQTSRQGSHGSSPKTPQVAPGTSKSMSPTSQAQG. Residues 816-828 are compositionally biased toward pro residues; sequence SPMPPIGPPPGLS. The span at 830-848 shows a compositional bias: low complexity; the sequence is PPGLSMGLPPGLNGFPGPG. The span at 916–926 shows a compositional bias: polar residues; that stretch reads TQHSRQGSGSF. Over residues 954–967 the composition is skewed to basic and acidic residues; that stretch reads KPHDSNKHGQDSDV.

This sequence belongs to the NST1 family.

It localises to the cytoplasm. Its function is as follows. May act as a negative regulator of salt tolerance. This chain is Stress response protein NST1 (NST1), found in Phaeosphaeria nodorum (strain SN15 / ATCC MYA-4574 / FGSC 10173) (Glume blotch fungus).